The chain runs to 404 residues: Plasma serine protease inhibitor (404 aa).

An N-terminal signal peptide occupies residues Met-1–Leu-19. Residues Arg-20–Lys-24 constitute a propeptide, removed in mature form. O-linked (GalNAc...) threonine glycans are attached at residues Thr-35 and Thr-36. N-linked (GlcNAc...) asparagine glycosylation is found at Asn-245, Asn-258, and Asn-334.

Belongs to the serpin family. Forms protease inhibiting heterodimers in extracellular body fluids with serine proteases such as activated protein C/coagulation factor V/F5, acrosin/ACR, chymotrypsinogen B/CTRB1, prothrombin/F2, factor Xa/F10, factor XI/F11, kallikrein/KLKB1, tissue kallikrein, trypsin/PRSS1, prostate specific antigen/KLK3, tissue plasminogen activator/PLAT and urinary plasminogen activator/PLAU. Forms membrane-anchored serine proteases inhibiting heterodimers with TMPRSS7 and TMPRSS11E. Interacts with SEMG2. Post-translationally, N-glycosylated; glycans consist of a mixture of sialylated bi- (including sialyl-Lewis X epitopes), tri- and tetra-antennary complex-type chains; affects the maximal heparin- and thrombomodulin-enhanced rates of thrombin inhibition. O-glycosylated; further modified with 2 sialic acid residues. Proteolytically cleaved at the N-terminus; inhibits slightly the heparin- and thrombomodulin-enhanced rates of thrombin inhibition. N- and O-glycosylated. In terms of processing, proteolytically cleaved. Inhibition of proteases is accompanied by formation of a stable enzyme-inhibitor complex and by degradation of the serpin to lower molecular weight derivatives. As to expression, expressed strongly in the liver, and moderately in the kidney and testis, but not in other tissues tested.

Its subcellular location is the secreted. It localises to the extracellular space. With respect to regulation, its inhibitory activity is greatly enhanced in the presence of glycosaminoglycans, heparin, thrombomodulin and phospholipids vesicles. Functionally, heparin-dependent serine protease inhibitor acting in body fluids and secretions. Inactivates serine proteases by binding irreversibly to their serine activation site. Involved in the regulation of intravascular and extravascular proteolytic activities. Plays hemostatic roles in the blood plasma. Acts as a procoagulant and pro-inflammatory factor by inhibiting the anticoagulant activated protein C factor as well as the generation of activated protein C factor by the thrombin/thrombomodulin complex. Acts as an anticoagulant factor by inhibiting blood coagulation factors like prothrombin, factor XI, factor Xa, plasma kallikrein and fibrinolytic enzymes such as tissue- and urinary-type plasminogen activators. In seminal plasma, inactivates several serine proteases implicated in the reproductive system. Inhibits the serpin acrosin; indirectly protects component of the male genital tract from being degraded by excessive released acrosin. Inhibits tissue- and urinary-type plasminogen activator, prostate-specific antigen and kallikrein activities; has a control on the sperm motility and fertilization. Inhibits the activated protein C-catalyzed degradation of SEMG1 and SEMG2; regulates the degradation of semenogelin during the process of transfer of spermatozoa from the male reproductive tract into the female tract. In urine, inhibits urinary-type plasminogen activator and kallikrein activities. Inactivates membrane-anchored serine proteases activities such as MPRSS7 and TMPRSS11E. Inhibits urinary-type plasminogen activator-dependent tumor cell invasion and metastasis. May also play a non-inhibitory role in seminal plasma and urine as a hydrophobic hormone carrier by its binding to retinoic acid. The chain is Plasma serine protease inhibitor (SERPINA5) from Bos taurus (Bovine).